A 406-amino-acid chain; its full sequence is Argininosuccinate synthase (406 aa).

Residue 9–17 (AYSGGLDTS) coordinates ATP. An L-citrulline-binding site is contributed by Tyr86. Gly116 serves as a coordination point for ATP. Thr118, Asn122, and Asp123 together coordinate L-aspartate. Asn122 is a binding site for L-citrulline. L-citrulline contacts are provided by Arg126, Ser174, Ser183, Glu259, and Tyr271.

The protein belongs to the argininosuccinate synthase family. Type 1 subfamily. As to quaternary structure, homotetramer.

It localises to the cytoplasm. It carries out the reaction L-citrulline + L-aspartate + ATP = 2-(N(omega)-L-arginino)succinate + AMP + diphosphate + H(+). Its pathway is amino-acid biosynthesis; L-arginine biosynthesis; L-arginine from L-ornithine and carbamoyl phosphate: step 2/3. In Geobacillus thermodenitrificans (strain NG80-2), this protein is Argininosuccinate synthase.